The primary structure comprises 367 residues: Leucine-rich repeat-containing protein 28 (367 aa).

LRR repeat units follow at residues 16-36 (KHKN…ELLK), 42-63 (YLER…LAQK), 66-87 (NLVE…IGSL), 89-110 (KLQC…IGRL), 112-133 (ALRH…VGDL), 135-156 (ELQT…LHMC), 158-180 (SLQY…CQLP), 181-202 (SLNE…LGRS), and 204-226 (ELQY…LYNK).

The sequence is that of Leucine-rich repeat-containing protein 28 (LRRC28) from Homo sapiens (Human).